A 487-amino-acid chain; its full sequence is NADH-quinone oxidoreductase subunit N (487 aa).

A run of 14 helical transmembrane segments spans residues Leu-8–Ile-28, Phe-35–Val-55, Gly-78–Tyr-98, Glu-104–His-124, Leu-125–Tyr-145, Tyr-159–Ala-179, Ile-203–Phe-223, Pro-235–Met-255, Leu-271–Gln-291, Leu-297–Gln-317, Ile-328–Leu-348, Ala-376–Gly-396, Leu-409–Leu-428, and Ala-451–Ile-471.

Belongs to the complex I subunit 2 family. NDH-1 is composed of 13 different subunits. Subunits NuoA, H, J, K, L, M, N constitute the membrane sector of the complex.

It localises to the cell inner membrane. It catalyses the reaction a quinone + NADH + 5 H(+)(in) = a quinol + NAD(+) + 4 H(+)(out). Its function is as follows. NDH-1 shuttles electrons from NADH, via FMN and iron-sulfur (Fe-S) centers, to quinones in the respiratory chain. The immediate electron acceptor for the enzyme in this species is believed to be ubiquinone. Couples the redox reaction to proton translocation (for every two electrons transferred, four hydrogen ions are translocated across the cytoplasmic membrane), and thus conserves the redox energy in a proton gradient. This is NADH-quinone oxidoreductase subunit N from Yersinia pseudotuberculosis serotype O:1b (strain IP 31758).